Reading from the N-terminus, the 443-residue chain is ATP-dependent protease ATPase subunit HslU (443 aa).

Residues Ile18, 60–65, Asp256, Glu321, and Arg393 each bind ATP; that span reads GVGKTE.

It belongs to the ClpX chaperone family. HslU subfamily. A double ring-shaped homohexamer of HslV is capped on each side by a ring-shaped HslU homohexamer. The assembly of the HslU/HslV complex is dependent on binding of ATP.

The protein resides in the cytoplasm. ATPase subunit of a proteasome-like degradation complex; this subunit has chaperone activity. The binding of ATP and its subsequent hydrolysis by HslU are essential for unfolding of protein substrates subsequently hydrolyzed by HslV. HslU recognizes the N-terminal part of its protein substrates and unfolds these before they are guided to HslV for hydrolysis. The sequence is that of ATP-dependent protease ATPase subunit HslU from Escherichia coli O157:H7 (strain EC4115 / EHEC).